The following is an 89-amino-acid chain: Small ribosomal subunit protein bS20 (89 aa).

The segment at 1-21 (MANSAQAKKRARQNVKARKHN) is disordered. Basic residues predominate over residues 7–21 (AKKRARQNVKARKHN).

The protein belongs to the bacterial ribosomal protein bS20 family.

Its function is as follows. Binds directly to 16S ribosomal RNA. This Acinetobacter baylyi (strain ATCC 33305 / BD413 / ADP1) protein is Small ribosomal subunit protein bS20.